The following is a 334-amino-acid chain: MSGFYHKHFLKLLDFTPAELNSLLQLAAKLKADKKSGKEEAKLTGKNIALIFEKDSTRTRCSFEVAAYDQGARVTYLGPSGSQIGHKESIKDTARVLGRMYDGIQYRGYGQEIVETLAEYASVPVWNGLTNEFHPTQLLADLLTMQEHLPGKAFNEMTLVYAGDARNNMGNSMLEAAALTGLDLRLVAPQACWPEAALVTECRALAQQNGGNITLTEDVAKGVEGADFIYTDVWVSMGEAKEKWAERIALLREYQVNSKMMQLTGNPEVKFLHCLPAFHDDQTTLGKKMAEEFGLHGGMEVTDEVFESAASIVFDQAENRMHTIKAVMVATLSK.

Carbamoyl phosphate contacts are provided by residues 56-59 (STRT), Q83, R107, and 134-137 (HPTQ). Residues N168, D232, and 236-237 (SM) contribute to the L-ornithine site. C274 contacts Zn(2+). Carbamoyl phosphate contacts are provided by residues 274–275 (CL) and R320.

This sequence belongs to the aspartate/ornithine carbamoyltransferase superfamily. OTCase family. As to quaternary structure, in E.coli strain K12, trimer of identical or non-identical chains are composed of ArgI (I) and/or ArgF (F). The trimer has the following composition: FFI, FFF, FII, III. E.coli strains B and W, which are known to contain only ArgI, produce only a trimer of identical chains (III).

It is found in the cytoplasm. It carries out the reaction carbamoyl phosphate + L-ornithine = L-citrulline + phosphate + H(+). It functions in the pathway amino-acid biosynthesis; L-arginine biosynthesis; L-arginine from L-ornithine and carbamoyl phosphate: step 1/3. Its activity is regulated as follows. Reversely inhibited by N-(N-Sulfodiaminophosphinyl)-L-ornithine. Zinc is an allosteric regulator of the substrate-bound enzyme and a competitive inhibitor of the free enzyme. Its function is as follows. Reversibly catalyzes the transfer of the carbamoyl group from carbamoyl phosphate (CP) to the N(epsilon) atom of ornithine (ORN) to produce L-citrulline, which is a substrate for argininosuccinate synthetase, the enzyme involved in the final step in arginine biosynthesis. This Escherichia coli (strain K12) protein is Ornithine carbamoyltransferase subunit I.